The following is a 382-amino-acid chain: Chaperone protein DnaJ (382 aa).

In terms of domain architecture, J spans 5–70; sequence DYYEVLGVSR…DKKAAYDRYG (66 aa). A CR-type zinc finger spans residues 141 to 219; that stretch reads GVQKTINVPA…CHGAGRVEKE (79 aa). Zn(2+)-binding residues include C154, C157, C171, C174, C193, C196, C207, and C210. CXXCXGXG motif repeat units follow at residues 154–161, 171–178, 193–200, and 207–214; these read CDACKGTG, CPTCSGMG, CPTCNGMG, and CKVCHGAG.

The protein belongs to the DnaJ family. As to quaternary structure, homodimer. Requires Zn(2+) as cofactor.

It localises to the cytoplasm. Functionally, participates actively in the response to hyperosmotic and heat shock by preventing the aggregation of stress-denatured proteins and by disaggregating proteins, also in an autonomous, DnaK-independent fashion. Unfolded proteins bind initially to DnaJ; upon interaction with the DnaJ-bound protein, DnaK hydrolyzes its bound ATP, resulting in the formation of a stable complex. GrpE releases ADP from DnaK; ATP binding to DnaK triggers the release of the substrate protein, thus completing the reaction cycle. Several rounds of ATP-dependent interactions between DnaJ, DnaK and GrpE are required for fully efficient folding. Also involved, together with DnaK and GrpE, in the DNA replication of plasmids through activation of initiation proteins. This Cereibacter sphaeroides (strain ATCC 17023 / DSM 158 / JCM 6121 / CCUG 31486 / LMG 2827 / NBRC 12203 / NCIMB 8253 / ATH 2.4.1.) (Rhodobacter sphaeroides) protein is Chaperone protein DnaJ.